The sequence spans 377 residues: GTP 3',8-cyclase (377 aa).

A disordered region spans residues 1–29; sequence MTTRLYLSPTPPRNDREGASKSTSASIKH. The Radical SAM core domain maps to 45-271; that stretch reads RFGRIARDLR…FTLSPAKEPR (227 aa). A GTP-binding site is contributed by R54. 2 residues coordinate [4Fe-4S] cluster: C61 and C65. Y67 provides a ligand contact to S-adenosyl-L-methionine. A [4Fe-4S] cluster-binding site is contributed by C68. Position 105 (R105) interacts with GTP. G109 serves as a coordination point for S-adenosyl-L-methionine. T140 provides a ligand contact to GTP. S164 serves as a coordination point for S-adenosyl-L-methionine. GTP is bound at residue K201. M235 serves as a coordination point for S-adenosyl-L-methionine. [4Fe-4S] cluster is bound by residues C304 and C307. 309–311 serves as a coordination point for GTP; the sequence is RSR. C321 contacts [4Fe-4S] cluster.

Belongs to the radical SAM superfamily. MoaA family. As to quaternary structure, monomer and homodimer. It depends on [4Fe-4S] cluster as a cofactor.

It catalyses the reaction GTP + AH2 + S-adenosyl-L-methionine = (8S)-3',8-cyclo-7,8-dihydroguanosine 5'-triphosphate + 5'-deoxyadenosine + L-methionine + A + H(+). The protein operates within cofactor biosynthesis; molybdopterin biosynthesis. In terms of biological role, catalyzes the cyclization of GTP to (8S)-3',8-cyclo-7,8-dihydroguanosine 5'-triphosphate. The chain is GTP 3',8-cyclase from Corynebacterium glutamicum (strain ATCC 13032 / DSM 20300 / JCM 1318 / BCRC 11384 / CCUG 27702 / LMG 3730 / NBRC 12168 / NCIMB 10025 / NRRL B-2784 / 534).